The sequence spans 537 residues: CTP synthase (537 aa).

Residues methionine 1–leucine 269 form an amidoligase domain region. Residue serine 15 coordinates CTP. Serine 15 contacts UTP. Serine 16 to isoleucine 21 provides a ligand contact to ATP. Tyrosine 56 provides a ligand contact to L-glutamine. Position 73 (aspartate 73) interacts with ATP. Mg(2+)-binding residues include aspartate 73 and glutamate 143. Residues aspartate 150–glutamate 152, lysine 190–glutamine 195, and lysine 226 each bind CTP. Residues lysine 190–glutamine 195 and lysine 226 contribute to the UTP site. The Glutamine amidotransferase type-1 domain occupies asparagine 295 to lysine 537. Glycine 357 provides a ligand contact to L-glutamine. Cysteine 384 (nucleophile; for glutamine hydrolysis) is an active-site residue. Residues leucine 385–glutamine 388, glutamate 408, and arginine 465 each bind L-glutamine. Catalysis depends on residues histidine 510 and glutamate 512.

The protein belongs to the CTP synthase family. In terms of assembly, homotetramer.

It catalyses the reaction UTP + L-glutamine + ATP + H2O = CTP + L-glutamate + ADP + phosphate + 2 H(+). The enzyme catalyses L-glutamine + H2O = L-glutamate + NH4(+). It carries out the reaction UTP + NH4(+) + ATP = CTP + ADP + phosphate + 2 H(+). It participates in pyrimidine metabolism; CTP biosynthesis via de novo pathway; CTP from UDP: step 2/2. Allosterically activated by GTP, when glutamine is the substrate; GTP has no effect on the reaction when ammonia is the substrate. The allosteric effector GTP functions by stabilizing the protein conformation that binds the tetrahedral intermediate(s) formed during glutamine hydrolysis. Inhibited by the product CTP, via allosteric rather than competitive inhibition. In terms of biological role, catalyzes the ATP-dependent amination of UTP to CTP with either L-glutamine or ammonia as the source of nitrogen. Regulates intracellular CTP levels through interactions with the four ribonucleotide triphosphates. The sequence is that of CTP synthase from Flavobacterium johnsoniae (strain ATCC 17061 / DSM 2064 / JCM 8514 / BCRC 14874 / CCUG 350202 / NBRC 14942 / NCIMB 11054 / UW101) (Cytophaga johnsonae).